We begin with the raw amino-acid sequence, 387 residues long: Trichocyst matrix protein T2-C (387 aa).

The signal sequence occupies residues 1–19 (MKTIILALALIVLASSTQA). The propeptide occupies 20–48 (DVIATIKKIDQSPFGRTLFDTIWLELQTG). Residues 51–163 (LDRLLQTLTD…KVLEHQEATA (113 aa)) are a coiled coil. A propeptide spanning residues 184–239 (KGKATKQPAHKFTKEVASMIQKHFTTSAKKAAKFQHRKGYSKLFKAFATIASKVEQ) is cleaved from the precursor. Residues 294–333 (TALANAQSDLAALNDVIAQVEASLDTTNQRIENVSADRND) are a coiled coil.

This sequence belongs to the TMP family. In terms of processing, two components are produced by post-translational processing from the precursor peptide.

The protein resides in the trichocyst. Its function is as follows. Structural protein that crystallize inside the trichocyst matrix. This chain is Trichocyst matrix protein T2-C (T2C), found in Paramecium tetraurelia.